The following is a 476-amino-acid chain: Aspartyl/glutamyl-tRNA(Asn/Gln) amidotransferase subunit B (476 aa).

This sequence belongs to the GatB/GatE family. GatB subfamily. As to quaternary structure, heterotrimer of A, B and C subunits.

The enzyme catalyses L-glutamyl-tRNA(Gln) + L-glutamine + ATP + H2O = L-glutaminyl-tRNA(Gln) + L-glutamate + ADP + phosphate + H(+). It carries out the reaction L-aspartyl-tRNA(Asn) + L-glutamine + ATP + H2O = L-asparaginyl-tRNA(Asn) + L-glutamate + ADP + phosphate + 2 H(+). Its function is as follows. Allows the formation of correctly charged Asn-tRNA(Asn) or Gln-tRNA(Gln) through the transamidation of misacylated Asp-tRNA(Asn) or Glu-tRNA(Gln) in organisms which lack either or both of asparaginyl-tRNA or glutaminyl-tRNA synthetases. The reaction takes place in the presence of glutamine and ATP through an activated phospho-Asp-tRNA(Asn) or phospho-Glu-tRNA(Gln). The sequence is that of Aspartyl/glutamyl-tRNA(Asn/Gln) amidotransferase subunit B from Latilactobacillus sakei subsp. sakei (strain 23K) (Lactobacillus sakei subsp. sakei).